Here is a 278-residue protein sequence, read N- to C-terminus: Ribosomal RNA small subunit methyltransferase A (278 aa).

S-adenosyl-L-methionine is bound by residues asparagine 28, leucine 30, glycine 55, glutamate 77, aspartate 103, and asparagine 122.

Belongs to the class I-like SAM-binding methyltransferase superfamily. rRNA adenine N(6)-methyltransferase family. RsmA subfamily.

It localises to the cytoplasm. The enzyme catalyses adenosine(1518)/adenosine(1519) in 16S rRNA + 4 S-adenosyl-L-methionine = N(6)-dimethyladenosine(1518)/N(6)-dimethyladenosine(1519) in 16S rRNA + 4 S-adenosyl-L-homocysteine + 4 H(+). Functionally, specifically dimethylates two adjacent adenosines (A1518 and A1519) in the loop of a conserved hairpin near the 3'-end of 16S rRNA in the 30S particle. May play a critical role in biogenesis of 30S subunits. In Cereibacter sphaeroides (strain ATCC 17025 / ATH 2.4.3) (Rhodobacter sphaeroides), this protein is Ribosomal RNA small subunit methyltransferase A.